We begin with the raw amino-acid sequence, 253 residues long: Distal tail protein (253 aa).

As to quaternary structure, homohexamer.

It localises to the virion. Its function is as follows. Forms a 40 Angstroms wide channel at the distal tip of the tail. Remains associated to the tail after DNA ejection. The polypeptide is Distal tail protein (Bacillus phage SPP1 (Bacteriophage SPP1)).